Consider the following 544-residue polypeptide: Secreted aspartic protease 9 (544 aa).

The first 17 residues, 1–17 (MRLNSVALLSLVATALA), serve as a signal peptide directing secretion. Positions 31 to 50 (GESKDDLSPEDDSNPRFVKR) are disordered. In terms of domain architecture, Peptidase A1 spans 65-479 (YMATLKIGSN…DLDDYEVSLA (415 aa)). 83 to 85 (DTG) is a pepstatin A binding site. Cysteines 98 and 195 form a disulfide. The active site involves T167. N-linked (GlcNAc...) asparagine glycosylation is found at N212, N240, and N252. The active site involves D371. 371–375 (DTGST) contributes to the pepstatin A binding site. A disulfide bond links C406 and C441. Residues N422 and N499 are each glycosylated (N-linked (GlcNAc...) asparagine). A disordered region spans residues 500-520 (SSGSGTTSSSGTSTSTSTRHS).

The protein belongs to the peptidase A1 family. Monomer. The GPI-anchor is attached to the protein in the endoplasmic reticulum and serves to target the protein to the cell surface. There, the glucosamine-inositol phospholipid moiety is cleaved off and the GPI-modified mannoprotein is covalently attached via its lipidless GPI glycan remnant to the 1,6-beta-glucan of the outer cell wall layer.

Its subcellular location is the cell membrane. It is found in the secreted. It localises to the cell wall. The catalysed reaction is Preferential cleavage at the carboxyl of hydrophobic amino acids, but fails to cleave 15-Leu-|-Tyr-16, 16-Tyr-|-Leu-17 and 24-Phe-|-Phe-25 of insulin B chain. Activates trypsinogen, and degrades keratin.. In terms of biological role, secreted aspartic peptidases (SAPs) are a group of ten acidic hydrolases considered as key virulence factors. These enzymes supply the fungus with nutrient amino acids as well as are able to degrade the selected host's proteins involved in the immune defense. Moreover, acts toward human hemoglobin though limited proteolysis to generate a variety of antimicrobial hemocidins, enabling to compete with the other microorganisms of the same physiological niche using the microbicidal peptides generated from the host protein. Its function is as follows. Plays a key role in defense against host by cleaving histatin-5 (Hst 5), a peptide from human saliva that carries out fungicidal activity. The cleavage rate decreases in an order of SAP2 &gt; SAP9 &gt; SAP3 &gt; SAP7 &gt; SAP4 &gt; SAP1 &gt; SAP8. The first cleavage occurs between residues 'Lys-17' and 'His-18' of Hst 5, giving DSHAKRHHGYKRKFHEK and HHSHRGY peptides. Simultaneously, the DSHAKRHHGYKRK peptide is also formed. Further fragmentation by SAP9 results in FHEK product. The chain is Secreted aspartic protease 9 from Candida albicans (Yeast).